The chain runs to 274 residues: Rhamnulose-1-phosphate aldolase (274 aa).

The active site involves glutamate 117. Residues histidine 141, histidine 143, and histidine 212 each contribute to the Zn(2+) site.

The protein belongs to the aldolase class II family. RhaD subfamily. Homotetramer. Requires Zn(2+) as cofactor.

It is found in the cytoplasm. The enzyme catalyses L-rhamnulose 1-phosphate = (S)-lactaldehyde + dihydroxyacetone phosphate. The protein operates within carbohydrate degradation; L-rhamnose degradation; glycerone phosphate from L-rhamnose: step 3/3. Catalyzes the reversible cleavage of L-rhamnulose-1-phosphate to dihydroxyacetone phosphate (DHAP) and L-lactaldehyde. The protein is Rhamnulose-1-phosphate aldolase of Escherichia fergusonii (strain ATCC 35469 / DSM 13698 / CCUG 18766 / IAM 14443 / JCM 21226 / LMG 7866 / NBRC 102419 / NCTC 12128 / CDC 0568-73).